The primary structure comprises 355 residues: Uroporphyrinogen decarboxylase (355 aa).

Substrate contacts are provided by residues 27-31 (RQAGR), Phe-46, Asp-78, Tyr-155, Ser-210, and His-328.

It belongs to the uroporphyrinogen decarboxylase family. In terms of assembly, homodimer.

It localises to the cytoplasm. The catalysed reaction is uroporphyrinogen III + 4 H(+) = coproporphyrinogen III + 4 CO2. The protein operates within porphyrin-containing compound metabolism; protoporphyrin-IX biosynthesis; coproporphyrinogen-III from 5-aminolevulinate: step 4/4. Functionally, catalyzes the decarboxylation of four acetate groups of uroporphyrinogen-III to yield coproporphyrinogen-III. This is Uroporphyrinogen decarboxylase from Pseudomonas aeruginosa (strain ATCC 15692 / DSM 22644 / CIP 104116 / JCM 14847 / LMG 12228 / 1C / PRS 101 / PAO1).